We begin with the raw amino-acid sequence, 427 residues long: Tol-Pal system protein TolB (427 aa).

A signal peptide spans 1–23; the sequence is MKLLKRLVSVFAIVLAVGSNAFA.

It belongs to the TolB family. In terms of assembly, the Tol-Pal system is composed of five core proteins: the inner membrane proteins TolA, TolQ and TolR, the periplasmic protein TolB and the outer membrane protein Pal. They form a network linking the inner and outer membranes and the peptidoglycan layer.

It is found in the periplasm. Its function is as follows. Part of the Tol-Pal system, which plays a role in outer membrane invagination during cell division and is important for maintaining outer membrane integrity. The chain is Tol-Pal system protein TolB from Haemophilus influenzae (strain 86-028NP).